A 252-amino-acid polypeptide reads, in one-letter code: Ribosomal RNA small subunit methyltransferase J (252 aa).

S-adenosyl-L-methionine contacts are provided by residues 101–102 (RD), 117–118 (ER), 153–154 (SS), and Asp171.

This sequence belongs to the methyltransferase superfamily. RsmJ family.

It is found in the cytoplasm. It carries out the reaction guanosine(1516) in 16S rRNA + S-adenosyl-L-methionine = N(2)-methylguanosine(1516) in 16S rRNA + S-adenosyl-L-homocysteine + H(+). In terms of biological role, specifically methylates the guanosine in position 1516 of 16S rRNA. The chain is Ribosomal RNA small subunit methyltransferase J from Salmonella schwarzengrund (strain CVM19633).